The following is a 247-amino-acid chain: ATP synthase subunit a, chloroplastic (247 aa).

A run of 5 helical transmembrane segments spans residues 38–58 (QVLI…TIAV), 95–115 (VPFI…GALL), 134–154 (INTT…AGLT), 199–219 (LVVV…VMFL), and 220–240 (GLFT…AYIG).

It belongs to the ATPase A chain family. F-type ATPases have 2 components, CF(1) - the catalytic core - and CF(0) - the membrane proton channel. CF(1) has five subunits: alpha(3), beta(3), gamma(1), delta(1), epsilon(1). CF(0) has four main subunits: a, b, b' and c.

It localises to the plastid. The protein localises to the chloroplast thylakoid membrane. Its function is as follows. Key component of the proton channel; it plays a direct role in the translocation of protons across the membrane. This Panax ginseng (Korean ginseng) protein is ATP synthase subunit a, chloroplastic.